Reading from the N-terminus, the 269-residue chain is MSRLEQRFAELKAEGRSALVTFVTAGDPGYDASLQILKGLPAAGADVIELGMPFTDPMADGVAIQLATLRALEAGQNLAKTLQMVREFRVDNQATPIVLMGYYNPIHRFGVEKFVAEAKEAGVDGLIIVDLPPEHDAELATPAQAAGIDFIRLTTPTTDDARLPRVLERSSGFVYYVSVAGVTGAGSATTEHVTEAIARLRRHTDLPISVGFGIRTPEQAAAIARLADGVVVGSALVDKIAQAKDADQAVADVLSLCSALAEGVRGARR.

Catalysis depends on proton acceptor residues Glu49 and Asp60.

Belongs to the TrpA family. Tetramer of two alpha and two beta chains.

The catalysed reaction is (1S,2R)-1-C-(indol-3-yl)glycerol 3-phosphate + L-serine = D-glyceraldehyde 3-phosphate + L-tryptophan + H2O. It functions in the pathway amino-acid biosynthesis; L-tryptophan biosynthesis; L-tryptophan from chorismate: step 5/5. In terms of biological role, the alpha subunit is responsible for the aldol cleavage of indoleglycerol phosphate to indole and glyceraldehyde 3-phosphate. The chain is Tryptophan synthase alpha chain from Pseudomonas putida (strain W619).